The primary structure comprises 105 residues: Met repressor (105 aa).

It belongs to the MetJ family. As to quaternary structure, homodimer.

Its subcellular location is the cytoplasm. Functionally, this regulatory protein, when combined with SAM (S-adenosylmethionine) represses the expression of the methionine regulon and of enzymes involved in SAM synthesis. The polypeptide is Met repressor (Photorhabdus laumondii subsp. laumondii (strain DSM 15139 / CIP 105565 / TT01) (Photorhabdus luminescens subsp. laumondii)).